Consider the following 487-residue polypeptide: Complement C1r subcomponent-like protein (487 aa).

Residues 1–35 (MPGPRVWGKYLWRSPHSKGCPGAMWWLLLWGVLQA) form the signal peptide. The region spanning 39-163 (RGSVLLAQEL…KGFLALYQTV (125 aa)) is the CUB domain. The cysteines at positions 94 and 112 are disulfide-linked. Residues asparagine 147 and asparagine 166 are each glycosylated (N-linked (GlcNAc...) asparagine). A Sushi domain is found at 165–230 (VNYSQPISEA…DGEEVLQCMP (66 aa)). Cysteine 195 and cysteine 228 are disulfide-bonded. An N-linked (GlcNAc...) (complex) asparagine glycan is attached at asparagine 242. The Peptidase S1 domain maps to 245-484 (TLGSSRAKLG…YVDWIKGVMN (240 aa)). Catalysis depends on histidine 283, which acts as the Charge relay system. A glycan (N-linked (GlcNAc...) asparagine) is linked at asparagine 296. Aspartate 339 (charge relay system) is an active-site residue. Residue asparagine 363 is glycosylated (N-linked (GlcNAc...) asparagine). 2 cysteine pairs are disulfide-bonded: cysteine 402–cysteine 421 and cysteine 432–cysteine 462. Serine 436 functions as the Charge relay system in the catalytic mechanism.

This sequence belongs to the peptidase S1 family. Highly expressed in placenta, liver, kidney, pancreas, moderately in lung, spleen, prostate, ovary, colon, and PBL, and weakly in heart, skeletal muscle, thymus, testis, and small intestine. Expressed in PC-3 (prostate adenocarcinoma) and SK-OV-3 (ovary adenocarcinoma) cells, but not in LoVo and HT-29 (colon adenocarcinoma), SMMC7721 (hepatocellular carcinoma), CaoV-3 (ovary adenocarcinoma), HeLa (cervix epithelioid carcinoma), MCF-7 (breast adenocarcinoma), U-251MG (glioma) or A-549 (lung carcinoma) cells. Widely expressed in myeloid leukemia cell lines, including K-562 (chronic myelogenous leukemia), THP-1 (myelomonocytic leukemia), HL-60 and NB4 (promyelocytic leukemia), and KG-1 (acute myelogenous leukemia) cells. Expressed mainly in the liver and in serum (at protein level).

It localises to the secreted. Functionally, mediates the proteolytic cleavage of HP/haptoglobin in the endoplasmic reticulum. This Homo sapiens (Human) protein is Complement C1r subcomponent-like protein (C1RL).